Reading from the N-terminus, the 237-residue chain is Demethylmenaquinone methyltransferase (237 aa).

S-adenosyl-L-methionine contacts are provided by residues threonine 58, aspartate 79, and 106–107 (NA).

This sequence belongs to the class I-like SAM-binding methyltransferase superfamily. MenG/UbiE family.

It catalyses the reaction a 2-demethylmenaquinol + S-adenosyl-L-methionine = a menaquinol + S-adenosyl-L-homocysteine + H(+). The protein operates within quinol/quinone metabolism; menaquinone biosynthesis; menaquinol from 1,4-dihydroxy-2-naphthoate: step 2/2. Its function is as follows. Methyltransferase required for the conversion of demethylmenaquinol (DMKH2) to menaquinol (MKH2). In Bacillus anthracis (strain A0248), this protein is Demethylmenaquinone methyltransferase.